The chain runs to 109 residues: Large ribosomal subunit protein uL24 (109 aa).

It belongs to the universal ribosomal protein uL24 family. Part of the 50S ribosomal subunit.

Its function is as follows. One of two assembly initiator proteins, it binds directly to the 5'-end of the 23S rRNA, where it nucleates assembly of the 50S subunit. Functionally, one of the proteins that surrounds the polypeptide exit tunnel on the outside of the subunit. The chain is Large ribosomal subunit protein uL24 from Syntrophotalea carbinolica (strain DSM 2380 / NBRC 103641 / GraBd1) (Pelobacter carbinolicus).